Reading from the N-terminus, the 314-residue chain is Olfactory receptor 1E1 (314 aa).

Residues 1 to 25 are Extracellular-facing; that stretch reads MMGQNQTSISDFLLLGLPIQPEQQN. A glycan (N-linked (GlcNAc...) asparagine) is linked at asparagine 5. A helical transmembrane segment spans residues 26–49; sequence LCYALFLAMYLTTLLGNLLIIVLI. Over 50-57 the chain is Cytoplasmic; sequence RLDSHLHT. The chain crosses the membrane as a helical span at residues 58 to 79; that stretch reads PMYLFLSNLSFSDLCFSSVTIP. At 80–100 the chain is on the extracellular side; it reads KLLQNMQNQDPSIPYADCLTQ. An intrachain disulfide couples cysteine 97 to cysteine 189. Residues 101–120 form a helical membrane-spanning segment; the sequence is MYFFLLFGDLESFLLVAMAY. The Cytoplasmic portion of the chain corresponds to 121–139; the sequence is DRYVAICFPLHYTAIMSPM. The chain crosses the membrane as a helical span at residues 140–158; sequence LCLSVVALSWVLTTFHAML. Over 159–195 the chain is Extracellular; sequence HTLLMARLCFCADNVIPHFFCDMSALLKLACSDTRVN. A helical transmembrane segment spans residues 196–219; that stretch reads EWVIFIMGGLILVIPFLLILGSYA. Over 220–236 the chain is Cytoplasmic; that stretch reads RIVSSILKVPSSKGICK. A helical transmembrane segment spans residues 237 to 259; sequence ALSTCGSHLSVVSLFYGTVIGLY. Residues 260-272 lie on the Extracellular side of the membrane; that stretch reads LCPSANSSTLKDT. A helical transmembrane segment spans residues 273–292; sequence VMAMIYTVVTPMLNPFIYSL. At 293-314 the chain is on the cytoplasmic side; the sequence is RNRDMKGALSRVIHQKKTFFSL.

Belongs to the G-protein coupled receptor 1 family.

The protein localises to the cell membrane. Its function is as follows. Odorant receptor. In Pan troglodytes (Chimpanzee), this protein is Olfactory receptor 1E1 (OR1E1).